The following is a 586-amino-acid chain: Madf and zinc finger protein 1 (586 aa).

The involved in interaction with Cp190 stretch occupies residues 161–194; it reads FMSEDDLAPPRKPGRPPRRTRPGQVFKFKVSFIR. Positions 201–292 form a DNA-binding region, MADF 1; it reads HLIQAYKEHP…KCEFLSVAPV (92 aa). The interval 294-319 is involved in interaction with Cp190; sequence TPRENEEDNDLTAIKLNFKEENLITT. Positions 320-413 form a DNA-binding region, MADF 2; the sequence is SFIETYANYP…MCSFLPAKGS (94 aa). 6 consecutive C2H2-type zinc fingers follow at residues 418–441, 448–471, 476–498, 504–527, 533–555, and 561–583; these read LYCDYCDKRFHGDYNLRVHIVKAH, YLCSFCPRRFDRHVDMDRHKLRSH, LKCQYCEKSFAVDTDLKVHTLIH, HVCDICGKTFRLKLLLDHHVNGVH, YSCNMCTKTFRKKFELANHIKGH, and KKCEYCDATFYDHSSLSRHRRSH.

As to quaternary structure, interacts (via regions flanking MADF domain 1) with Cp190 (via regions between the BTB domain and first zinc finger domain); the interaction is probably direct and is essential for protein function.

Its subcellular location is the nucleus. It localises to the chromosome. The protein resides in the nucleoplasm. In terms of biological role, chromatin-binding protein involved in the organization of active promoters and insulators. Essential for the activity of heterochromatin promoters; primarily binds to specific motifs within promoters of housekeeping genes. May also associate to a lesser extent with promoters in euchromatin. Mediates recruitment of Cp190, a multifunctional protein involved in the recruitment of transcription complexes, the creation of open chromatin regions and the activity of insulators. Cooperates with pita and su(Hw) to recruit Cp190 and regulate insulator function at the front-ultraabdominal (Fub) boundary. May cooperate with other C2H2 zinc finger proteins, such as M1BP, to recruit CP190 to promoters. May be involved in cellular organization and development of the eye. This is Madf and zinc finger protein 1 from Drosophila melanogaster (Fruit fly).